The sequence spans 334 residues: Geranylgeranyl pyrophosphate synthase ltmG (334 aa).

Residues lysine 53, arginine 56, and histidine 85 each coordinate isopentenyl diphosphate. The Mg(2+) site is built by aspartate 92 and aspartate 96. Arginine 101 is a binding site for dimethylallyl diphosphate. Arginine 102 contributes to the isopentenyl diphosphate binding site. Lysine 179, threonine 180, and glutamine 213 together coordinate dimethylallyl diphosphate. Residue aspartate 216 participates in Mg(2+) binding. Dimethylallyl diphosphate-binding residues include asparagine 220, lysine 230, and lysine 240.

Belongs to the FPP/GGPP synthase family. Mg(2+) serves as cofactor.

It carries out the reaction isopentenyl diphosphate + dimethylallyl diphosphate = (2E)-geranyl diphosphate + diphosphate. The catalysed reaction is isopentenyl diphosphate + (2E)-geranyl diphosphate = (2E,6E)-farnesyl diphosphate + diphosphate. The enzyme catalyses isopentenyl diphosphate + (2E,6E)-farnesyl diphosphate = (2E,6E,10E)-geranylgeranyl diphosphate + diphosphate. Its pathway is secondary metabolite biosynthesis. Functionally, geranylgeranyl pyrophosphate synthase; part of the gene cluster that mediates the biosynthesis of lolitrems, indole-diterpene mycotoxins that are potent tremorgens in mammals, and are synthesized by clavicipitaceous fungal endophytes in association with their grass hosts. The geranylgeranyl diphosphate (GGPP) synthase ltmG is proposed to catalyze the first step in lolitrem biosynthesis. LtmG catalyzes a series of iterative condensations of isopentenyl diphosphate (IPP) with dimethylallyl diphosphate (DMAPP), geranyl diphosphate (GPP), and farnesyl diphosphate (FPP), to form GGPP. GGPP then condenses with indole-3-glycerol phosphate to form 3-geranylgeranylindole, an acyclic intermediate, to be incorporated into paxilline. Either ltmG or ltmC could be responsible for this step, as both are putative prenyl transferases. The FAD-dependent monooxygenase ltmM then catalyzes the epoxidation of the two terminal alkenes of the geranylgeranyl moiety, which is subsequently cyclized by ltmB, to paspaline. The cytochrome P450 monooxygenases ltmQ and ltmP can sequentially oxidize paspaline to terpendole E and terpendole F. Alternatively, ltmP converts paspaline to an intermediate which is oxidized by ltmQ to terpendole F. LtmF, ltmK, ltmE and ltmJ appear to be unique to the epichloe endophytes. The prenyltransferase ltmF is involved in the 27-hydroxyl-O-prenylation. The cytochrome P450 monooxygenase ltmK is required for the oxidative acetal ring formation. The multi-functional prenyltransferase ltmE is required for C20- and C21-prenylations of the indole ring of paspalanes and acts together with the cytochrome P450 monooxygenase ltmJ to yield lolitremanes by multiple oxidations and ring closures. The stereoisomer pairs of lolitriol and lolitrem N or lolitrem B and lolitrem F may be attributed to variations in the way in which ring closure can occur under the action of ltmJ. While the major product of this pathway is lolitrem B, the prenyl transferases and cytochrome P450 monooxygenases identified in this pathway have a remarkable versatility in their regio- and stereo-specificities to generate a diverse range of metabolites that are products of a metabolic grid rather than a linear pathway. This is Geranylgeranyl pyrophosphate synthase ltmG from Epichloe festucae (strain Fl1).